The sequence spans 34 residues: MSDIN-like toxin proprotein 4 (34 aa).

A propeptide spanning residues Met-1–Pro-10 is cleaved from the precursor. A cross-link (cyclopeptide (Val-Pro)) is located at residues Val-11 to Pro-17. A propeptide spanning residues Cys-18–Cys-34 is cleaved from the precursor.

It belongs to the MSDIN fungal toxin family. In terms of processing, processed by the macrocyclase-peptidase enzyme POPB to yield a toxic cyclic heptapeptide. POPB first removes 10 residues from the N-terminus. Conformational trapping of the remaining peptide forces the enzyme to release this intermediate rather than proceed to macrocyclization. The enzyme rebinds the remaining peptide in a different conformation and catalyzes macrocyclization of the N-terminal 7 residues. In terms of tissue distribution, expressed in basidiocarps.

Functionally, probable toxin that belongs to the MSDIN-like toxin family responsible for a large number of food poisoning cases and deaths. This is MSDIN-like toxin proprotein 4 from Amanita exitialis (Guangzhou destroying angel).